A 760-amino-acid polypeptide reads, in one-letter code: Xaa-Pro dipeptidyl-peptidase (760 aa).

Active-site charge relay system residues include serine 349, aspartate 469, and histidine 499.

The protein belongs to the peptidase S15 family. Homodimer.

It is found in the cytoplasm. The catalysed reaction is Hydrolyzes Xaa-Pro-|- bonds to release unblocked, N-terminal dipeptides from substrates including Ala-Pro-|-p-nitroanilide and (sequentially) Tyr-Pro-|-Phe-Pro-|-Gly-Pro-|-Ile.. In terms of biological role, removes N-terminal dipeptides sequentially from polypeptides having unsubstituted N-termini provided that the penultimate residue is proline. This chain is Xaa-Pro dipeptidyl-peptidase, found in Streptococcus pyogenes serotype M6 (strain ATCC BAA-946 / MGAS10394).